The sequence spans 101 residues: uncharacterized protein (101 aa).

It is found in the mitochondrion. This is an uncharacterized protein from Arabidopsis thaliana (Mouse-ear cress).